The primary structure comprises 150 residues: Small ribosomal subunit protein eS19S (150 aa).

Belongs to the eukaryotic ribosomal protein eS19 family.

This is Small ribosomal subunit protein eS19S (RPS19S) from Ascaris suum (Pig roundworm).